The chain runs to 316 residues: RING finger protein 148 (316 aa).

The N-terminal stretch at 1–12 (MLLCVSCLSVNG) is a signal peptide. N56 carries N-linked (GlcNAc...) asparagine glycosylation. Positions 84-178 (VSGAVVLPEG…GNLKGMELLH (95 aa)) constitute a PA domain. Transmembrane regions (helical) follow at residues 173–193 (GMEL…IEVG) and 204–224 (VMSL…YCAW). The RING-type; atypical zinc-finger motif lies at 269 to 310 (CVVCFDMYKAQDVIRILTCKHFFHKTCIDPWLLAHRTCPMCK).

Its subcellular location is the membrane. The protein is RING finger protein 148 (Rnf148) of Mus musculus (Mouse).